The primary structure comprises 499 residues: Hepatic triacylglycerol lipase (499 aa).

An N-terminal signal peptide occupies residues 1–22 (MDTSPLCFSILLVLCIFIQSSA). N-linked (GlcNAc...) asparagine glycans are attached at residues Asn42 and Asn78. Ser168 serves as the catalytic Nucleophile. Catalysis depends on Asp194, which acts as the Charge relay system. The interval 254-277 (CHFLELYRHIAQHGFNAITQTIKC) is essential for determining substrate specificity. His279 acts as the Charge relay system in catalysis. Residues 352–486 (YHYQFKIQFI…RPTQEKIFVK (135 aa)) form the PLAT domain. 2 N-linked (GlcNAc...) asparagine glycosylation sites follow: Asn362 and Asn397.

Belongs to the AB hydrolase superfamily. Lipase family. Homodimer.

It localises to the secreted. It carries out the reaction a triacylglycerol + H2O = a diacylglycerol + a fatty acid + H(+). It catalyses the reaction a 1-acyl-sn-glycero-3-phosphocholine + H2O = sn-glycerol 3-phosphocholine + a fatty acid + H(+). The catalysed reaction is a 1,2-diacyl-sn-glycero-3-phosphocholine + H2O = a 2-acyl-sn-glycero-3-phosphocholine + a fatty acid + H(+). The enzyme catalyses 1,2,3-tri-(9Z-octadecenoyl)-glycerol + H2O = di-(9Z)-octadecenoylglycerol + (9Z)-octadecenoate + H(+). It carries out the reaction 1,2-di-(9Z-octadecenoyl)-sn-glycero-3-phosphocholine + H2O = (9Z-octadecenoyl)-sn-glycero-3-phosphocholine + (9Z)-octadecenoate + H(+). It catalyses the reaction 1,2,3-tributanoylglycerol + H2O = dibutanoylglycerol + butanoate + H(+). The catalysed reaction is 1,2-dihexadecanoyl-sn-glycero-3-phosphocholine + H2O = hexadecanoyl-sn-glycero-3-phosphocholine + hexadecanoate + H(+). The enzyme catalyses 1,2-di-(9Z-octadecenoyl)-sn-glycerol + H2O = 2-(9Z-octadecenoyl)-glycerol + (9Z)-octadecenoate + H(+). It carries out the reaction 1,2,3-tri-(9Z-octadecenoyl)-glycerol + H2O = 2,3-di-(9Z)-octadecenoyl-sn-glycerol + (9Z)-octadecenoate + H(+). It catalyses the reaction 1-(9Z-octadecenoyl)-sn-glycero-3-phospho-L-serine + H2O = sn-glycero-3-phospho-L-serine + (9Z)-octadecenoate + H(+). The catalysed reaction is 1-hexadecanoyl-sn-glycero-3-phosphocholine + H2O = sn-glycerol 3-phosphocholine + hexadecanoate + H(+). The enzyme catalyses 1,3-di-(9Z-octadecenoyl)-glycerol + H2O = 3-(9Z-octadecenoyl)-sn-glycerol + (9Z)-octadecenoate + H(+). Phospholipase A1 and triacylglycerol lipase are inhibited by sphingomyelin. Catalyzes the hydrolysis of triglycerides and phospholipids present in circulating plasma lipoproteins, including chylomicrons, intermediate density lipoproteins (IDL), low density lipoproteins (LDL) of large size and high density lipoproteins (HDL), releasing free fatty acids (FFA) and smaller lipoprotein particles. Also exhibits lysophospholipase activity. Can hydrolyze both neutral lipid and phospholipid substrates but shows a greater binding affinity for neutral lipid substrates than phospholipid substrates. In native LDL, preferentially hydrolyzes the phosphatidylcholine species containing polyunsaturated fatty acids at sn-2 position. The chain is Hepatic triacylglycerol lipase (LIPC) from Homo sapiens (Human).